The chain runs to 92 residues: Long neurotoxin 469 (92 aa).

The first 21 residues, 1-21, serve as a signal peptide directing secretion; the sequence is MKTLLLTLVVVTIVCLDLGDS. 5 disulfide bridges follow: cysteine 24/cysteine 41, cysteine 34/cysteine 62, cysteine 47/cysteine 51, cysteine 66/cysteine 77, and cysteine 78/cysteine 83.

The protein belongs to the three-finger toxin family. Long-chain subfamily. Type II alpha-neurotoxin sub-subfamily. As to expression, expressed by the venom gland.

It is found in the secreted. Binds with high affinity to muscular (alpha-1/CHRNA1) and neuronal (alpha-7/CHRNA7) nicotinic acetylcholine receptor (nAChR) and inhibits acetylcholine from binding to the receptor, thereby impairing neuromuscular and neuronal transmission. This is Long neurotoxin 469 from Drysdalia coronoides (White-lipped snake).